The sequence spans 321 residues: Putative ribose-phosphate pyrophosphokinase 2 (321 aa).

Residues 41-43 (DGE) and 100-101 (RQ) contribute to the ATP site. H134 provides a ligand contact to Mg(2+). Residues D223 and 227 to 231 (NTGVT) each bind D-ribose 5-phosphate.

The protein belongs to the ribose-phosphate pyrophosphokinase family. Class I subfamily. In terms of assembly, homohexamer. Requires Mg(2+) as cofactor.

The protein localises to the cytoplasm. It carries out the reaction D-ribose 5-phosphate + ATP = 5-phospho-alpha-D-ribose 1-diphosphate + AMP + H(+). Its pathway is metabolic intermediate biosynthesis; 5-phospho-alpha-D-ribose 1-diphosphate biosynthesis; 5-phospho-alpha-D-ribose 1-diphosphate from D-ribose 5-phosphate (route I): step 1/1. Functionally, involved in the biosynthesis of the central metabolite phospho-alpha-D-ribosyl-1-pyrophosphate (PRPP) via the transfer of pyrophosphoryl group from ATP to 1-hydroxyl of ribose-5-phosphate (Rib-5-P). The sequence is that of Putative ribose-phosphate pyrophosphokinase 2 from Lactococcus lactis subsp. lactis (strain IL1403) (Streptococcus lactis).